Reading from the N-terminus, the 246-residue chain is Transcription factor A, mitochondrial (246 aa).

The N-terminal 42 residues, Met-1 to Phe-42, are a transit peptide targeting the mitochondrion. Positions Pro-50–Lys-118 form a DNA-binding region, HMG box 1. 3 positions are modified to phosphoserine; by PKA: Ser-55, Ser-56, and Ser-61. Thr-122 carries the phosphothreonine modification. Positions Pro-155–Glu-219 form a DNA-binding region, HMG box 2. Ser-160 is modified (phosphoserine; by PKA). 2 positions are modified to phosphoserine: Ser-193 and Ser-195.

As to quaternary structure, monomer; binds DNA as a monomer. Homodimer. Component of the mitochondrial transcription initiation complex, composed at least of TFB2M, TFAM and POLRMT. In this complex TFAM recruits POLRMT to the promoter whereas TFB2M induces structural changes in POLRMT to enable promoter opening and trapping of the DNA non-template strand. Upon metabolic stress, forms a complex composed of FOXO3, SIRT3, TFAM and POLRMT. Interacts with TFB1M and TFB2M. Interacts with CLPX; this enhances DNA-binding. Post-translationally, phosphorylation by PKA within the HMG box 1 impairs DNA binding and promotes degradation by the AAA+ Lon protease.

Its subcellular location is the mitochondrion. It is found in the mitochondrion matrix. The protein localises to the mitochondrion nucleoid. Functionally, binds to the mitochondrial light strand promoter and functions in mitochondrial transcription regulation. Component of the mitochondrial transcription initiation complex, composed at least of TFB2M, TFAM and POLRMT that is required for basal transcription of mitochondrial DNA. In this complex, TFAM recruits POLRMT to a specific promoter whereas TFB2M induces structural changes in POLRMT to enable promoter opening and trapping of the DNA non-template strand. Required for accurate and efficient promoter recognition by the mitochondrial RNA polymerase. Promotes transcription initiation from the HSP1 and the light strand promoter by binding immediately upstream of transcriptional start sites. Is able to unwind DNA. Bends the mitochondrial light strand promoter DNA into a U-turn shape via its HMG boxes. Required for maintenance of normal levels of mitochondrial DNA. May play a role in organizing and compacting mitochondrial DNA. The polypeptide is Transcription factor A, mitochondrial (Homo sapiens (Human)).